The primary structure comprises 699 residues: Elongation factor G (699 aa).

The region spanning 8-290 (NRYRNIGICA…AVIEFLPAPD (283 aa)) is the tr-type G domain. GTP-binding positions include 17-24 (AHVDAGKT), 88-92 (DTPGH), and 142-145 (NKMD).

Belongs to the TRAFAC class translation factor GTPase superfamily. Classic translation factor GTPase family. EF-G/EF-2 subfamily.

It localises to the cytoplasm. Functionally, catalyzes the GTP-dependent ribosomal translocation step during translation elongation. During this step, the ribosome changes from the pre-translocational (PRE) to the post-translocational (POST) state as the newly formed A-site-bound peptidyl-tRNA and P-site-bound deacylated tRNA move to the P and E sites, respectively. Catalyzes the coordinated movement of the two tRNA molecules, the mRNA and conformational changes in the ribosome. This Alcanivorax borkumensis (strain ATCC 700651 / DSM 11573 / NCIMB 13689 / SK2) protein is Elongation factor G.